The chain runs to 182 residues: Putative adenylate kinase (182 aa).

Residues Gly-10, Gly-12, Lys-13, Thr-14, and Ser-15 each coordinate ATP. The tract at residues 30–53 (HLNEMIKEEHLYTEVDEVRDAVIA) is NMP. The interval 104–114 (ARGYSEEKIRE) is LID. Arg-105 and Lys-143 together coordinate ATP.

It belongs to the adenylate kinase family. AK6 subfamily. As to quaternary structure, interacts with uS11. Not a structural component of 40S pre-ribosomes, but transiently interacts with them by binding to uS11.

The catalysed reaction is AMP + ATP = 2 ADP. The enzyme catalyses ATP + H2O = ADP + phosphate + H(+). In terms of biological role, broad-specificity nucleoside monophosphate (NMP) kinase that catalyzes the reversible transfer of the terminal phosphate group between nucleoside triphosphates and monophosphates. Also has ATPase activity. Involved in the late maturation steps of the 30S ribosomal particles, specifically 16S rRNA maturation. While NMP activity is not required for ribosome maturation, ATPase activity is. Associates transiently with small ribosomal subunit protein uS11. ATP hydrolysis breaks the interaction with uS11. May temporarily remove uS11 from the ribosome to enable a conformational change of the ribosomal RNA that is needed for the final maturation step of the small ribosomal subunit. In Methanosarcina barkeri (strain Fusaro / DSM 804), this protein is Putative adenylate kinase.